A 252-amino-acid chain; its full sequence is Protein PYRAB15930 (252 aa).

It belongs to the CinA family.

In Pyrococcus abyssi (strain GE5 / Orsay), this protein is Protein PYRAB15930.